A 124-amino-acid chain; its full sequence is Fluoride-specific ion channel FluC (124 aa).

4 helical membrane-spanning segments follow: residues 5–25 (FLQVALGGALGSAARYGVNIL), 35–55 (LGTLSVNIAGCLAMGLLAALL), 63–83 (LAPFLLTGMLGGFTTFSAFAL), and 98–118 (LGYVLGSVVLSLAAVIAGLTV). Na(+) contacts are provided by glycine 73 and threonine 76.

This sequence belongs to the fluoride channel Fluc/FEX (TC 1.A.43) family.

It localises to the cell inner membrane. The catalysed reaction is fluoride(in) = fluoride(out). Its activity is regulated as follows. Na(+) is not transported, but it plays an essential structural role and its presence is essential for fluoride channel function. Functionally, fluoride-specific ion channel. Important for reducing fluoride concentration in the cell, thus reducing its toxicity. In Paracoccus denitrificans (strain Pd 1222), this protein is Fluoride-specific ion channel FluC.